The chain runs to 53 residues: Putative defensin-like protein 53 (53 aa).

4 cysteine pairs are disulfide-bonded: Cys-12–Cys-51, Cys-16–Cys-40, Cys-26–Cys-49, and Cys-30–Cys-50.

It belongs to the DEFL family.

The protein is Putative defensin-like protein 53 of Arabidopsis thaliana (Mouse-ear cress).